Consider the following 387-residue polypeptide: 1-deoxy-D-xylulose 5-phosphate reductoisomerase (387 aa).

5 residues coordinate NADPH: Thr-10, Gly-11, Ser-12, Ile-13, and Asn-124. Lys-125 lines the 1-deoxy-D-xylulose 5-phosphate pocket. Glu-126 contributes to the NADPH binding site. Asp-150 lines the Mn(2+) pocket. Ser-151, Glu-152, Ser-176, and His-199 together coordinate 1-deoxy-D-xylulose 5-phosphate. Glu-152 is a Mn(2+) binding site. Gly-205 is a binding site for NADPH. Residues Ser-212, Asn-217, Lys-218, and Glu-221 each contribute to the 1-deoxy-D-xylulose 5-phosphate site. Position 221 (Glu-221) interacts with Mn(2+).

This sequence belongs to the DXR family. The cofactor is Mg(2+). It depends on Mn(2+) as a cofactor.

The enzyme catalyses 2-C-methyl-D-erythritol 4-phosphate + NADP(+) = 1-deoxy-D-xylulose 5-phosphate + NADPH + H(+). The protein operates within isoprenoid biosynthesis; isopentenyl diphosphate biosynthesis via DXP pathway; isopentenyl diphosphate from 1-deoxy-D-xylulose 5-phosphate: step 1/6. In terms of biological role, catalyzes the NADPH-dependent rearrangement and reduction of 1-deoxy-D-xylulose-5-phosphate (DXP) to 2-C-methyl-D-erythritol 4-phosphate (MEP). This Clostridium beijerinckii (strain ATCC 51743 / NCIMB 8052) (Clostridium acetobutylicum) protein is 1-deoxy-D-xylulose 5-phosphate reductoisomerase.